A 61-amino-acid polypeptide reads, in one-letter code: Small ribosomal subunit protein uS14C (61 aa).

Residues Cys-24, Cys-27, Cys-40, and Cys-43 each contribute to the Zn(2+) site.

Belongs to the universal ribosomal protein uS14 family. Zinc-binding uS14 subfamily. As to quaternary structure, part of the 30S ribosomal subunit. Contacts proteins S3 and S10. Requires Zn(2+) as cofactor.

Binds 16S rRNA, required for the assembly of 30S particles and may also be responsible for determining the conformation of the 16S rRNA at the A site. This is Small ribosomal subunit protein uS14C from Enterococcus faecalis (strain ATCC 700802 / V583).